Reading from the N-terminus, the 139-residue chain is Protein spalt-accessory (139 aa).

The first 16 residues, 1–16, serve as a signal peptide directing secretion; that stretch reads MKLLIALLALVTAAIA. The span at 60-75 shows a compositional bias: gly residues; it reads GIGQGGVHPGQGGFAG. A disordered region spans residues 60–139; it reads GIGQGGVHPG…HHEHHGHHRH (80 aa). Positions 109-121 are enriched in basic and acidic residues; it reads NPHEYPEHHGEHH. The segment covering 122 to 139 has biased composition (basic residues); it reads REHHEHHGHHEHHGHHRH.

Its subcellular location is the secreted. Its function is as follows. Likely to be involved in the establishment of the head. This Drosophila simulans (Fruit fly) protein is Protein spalt-accessory (sala).